The following is a 299-amino-acid chain: Hairy/enhancer-of-split related with YRPW motif protein 1 (299 aa).

Residues 1-53 form a disordered region; the sequence is MKRAHPDYSSSDSELDETIEVEKESADENGNLSSALCSMSPTTSSQVLARKRR. Polar residues predominate over residues 28-47; sequence ENGNLSSALCSMSPTTSSQV. The segment at 48-117 is transcriptional repression and interaction with NCOR1 and SIN3A; that stretch reads LARKRRRGII…GGKGYFDAHA (70 aa). A bHLH domain is found at 49 to 104; that stretch reads ARKRRRGIIEKRRRDRINNSLSELRRLVPSAFEKQGSAKLEKAEILQMTVDHLKML. Positions 122–158 constitute an Orange domain; the sequence is YRSLGFRECLAEVARYLSIIEGLDASDPLLVRLVSHL. The segment at 194-234 is disordered; the sequence is LLLPQNGHGNAGTAASPTEPHHQGRLASAHPEAPALRAPPS. The short motif at 289–292 is the YRPW motif element; it reads YRPW.

The protein belongs to the HEY family. In terms of assembly, may self-associate. Interacts with HES1, NCOR1 and SIN3A. Interacts with GATA4, GATA6 and HDAC1 and HEYL. Interacts with CCDC89/BOIP. As to expression, expressed in somitic mesoderm, brain, central nervous system, kidney, heart, nasal epithelium, limbs, lung, muscle, ovary and testis.

It localises to the nucleus. Functionally, transcriptional repressor which binds preferentially to the canonical E box sequence 5'-CACGTG-3'. Downstream effector of Notch signaling required for cardiovascular development. Specifically required for the Notch-induced endocardial epithelial to mesenchymal transition, which is itself criticial for cardiac valve and septum development. May be required in conjunction with HEY2 to specify arterial cell fate or identity. Promotes maintenance of neuronal precursor cells and glial versus neuronal fate specification. Represses transcription by the cardiac transcriptional activators GATA4 and GATA6 and by the neuronal bHLH factors ASCL1/MASH1 and NEUROD4/MATH3. The polypeptide is Hairy/enhancer-of-split related with YRPW motif protein 1 (Hey1) (Mus musculus (Mouse)).